A 648-amino-acid chain; its full sequence is DNA mismatch repair protein MutL (648 aa).

Positions 385 to 430 are disordered; it reads STVKGPAVNEPLTENTLNQQKVKTSASTPVVHTGNSVEPKPETSTA. The span at 396–430 shows a compositional bias: polar residues; the sequence is LTENTLNQQKVKTSASTPVVHTGNSVEPKPETSTA.

The protein belongs to the DNA mismatch repair MutL/HexB family.

Functionally, this protein is involved in the repair of mismatches in DNA. It is required for dam-dependent methyl-directed DNA mismatch repair. May act as a 'molecular matchmaker', a protein that promotes the formation of a stable complex between two or more DNA-binding proteins in an ATP-dependent manner without itself being part of a final effector complex. The protein is DNA mismatch repair protein MutL of Agathobacter rectalis (strain ATCC 33656 / DSM 3377 / JCM 17463 / KCTC 5835 / VPI 0990) (Eubacterium rectale).